The primary structure comprises 1020 residues: Sodium/potassium-transporting ATPase subunit alpha-2 (1020 aa).

The propeptide occupies 1-5; that stretch reads MGRGA. The segment at 1 to 31 is disordered; sequence MGRGAGREYSPAATTAENGGGKKKQKEKELD. The Cytoplasmic portion of the chain corresponds to 6–85; sequence GREYSPAATT…NALTPPPTTP (80 aa). Position 10 is a phosphoserine (Ser-10). The tract at residues 80 to 82 is interaction with phosphoinositide-3 kinase; it reads PPP. The helical transmembrane segment at 86 to 106 threads the bilayer; that stretch reads EWVKFCRQLFGGFSILLWIGA. Residues 107–129 lie on the Extracellular side of the membrane; that stretch reads LLCFLAYGILAAMEDEPSNDNLY. A helical transmembrane segment spans residues 130 to 150; sequence LGIVLAAVVIVTGCFSYYQEA. Topologically, residues 151-286 are cytoplasmic; that stretch reads KSSKIMDSFK…VGQTPIAMEI (136 aa). Positions 212–227 are enriched in polar residues; it reads DNSSLTGESEPQTRSP. Residues 212–231 form a disordered region; that stretch reads DNSSLTGESEPQTRSPEFTH. Residues 287 to 306 form a helical membrane-spanning segment; the sequence is EHFIQLITGVAVFLGVSFFV. Topologically, residues 307–318 are extracellular; the sequence is LSLILGYSWLEA. Residues 319–336 traverse the membrane as a helical segment; the sequence is VIFLIGIIVANVPEGLLA. Over 337–769 the chain is Cytoplasmic; sequence TVTVCLTLTA…EEGRLIFDNL (433 aa). The active-site 4-aspartylphosphate intermediate is Asp-374. Phosphoserine occurs at positions 439, 450, 496, and 559. A Phosphothreonine modification is found at Thr-570. A phosphoserine mark is found at Ser-587 and Ser-672. Mg(2+) contacts are provided by Asp-714 and Asp-718. The chain crosses the membrane as a helical span at residues 770 to 789; that stretch reads KKSIAYTLTSNIPEITPFLL. The Extracellular portion of the chain corresponds to 790–799; sequence FIIANIPLPL. A helical transmembrane segment spans residues 800-820; that stretch reads GTVTILCIDLGTDMVPAISLA. Residues 821 to 840 are Cytoplasmic-facing; that stretch reads YEAAESDIMKRQPRNSQTDK. Phosphoserine is present on Ser-826. A helical transmembrane segment spans residues 841–863; it reads LVNERLISMAYGQIGMIQALGGF. Residues 864–915 are Extracellular-facing; that stretch reads FTYFVILAENGFLPSRLLGIRLDWDDRTTNDLEDSYGQEWTYEQRKVVEFTC. A helical membrane pass occupies residues 916–935; that stretch reads HTAFFASIVVVQWADLIICK. Residues 936–948 lie on the Cytoplasmic side of the membrane; it reads TRRNSVFQQGMKN. Ser-940 is subject to Phosphoserine; by PKA. The chain crosses the membrane as a helical span at residues 949–967; the sequence is KILIFGLLEETALAAFLSY. Over 968 to 982 the chain is Extracellular; that stretch reads CPGMGVALRMYPLKV. Residues 983 to 1003 form a helical membrane-spanning segment; it reads TWWFCAFPYSLLIFIYDEVRK. Residues 1004–1020 lie on the Cytoplasmic side of the membrane; the sequence is LILRRYPGGWVEKETYY.

This sequence belongs to the cation transport ATPase (P-type) (TC 3.A.3) family. Type IIC subfamily. In terms of assembly, the sodium/potassium-transporting ATPase is composed of a catalytic alpha subunit, an auxiliary non-catalytic beta subunit and an additional regulatory subunit. Interacts with regulatory subunit FXYD1.

It is found in the membrane. The protein resides in the cell membrane. It catalyses the reaction K(+)(out) + Na(+)(in) + ATP + H2O = K(+)(in) + Na(+)(out) + ADP + phosphate + H(+). This is the catalytic component of the active enzyme, which catalyzes the hydrolysis of ATP coupled with the exchange of sodium and potassium ions across the plasma membrane. This action creates the electrochemical gradient of sodium and potassium ions, providing the energy for active transport of various nutrients. The chain is Sodium/potassium-transporting ATPase subunit alpha-2 (Atp1a2) from Mus musculus (Mouse).